Consider the following 144-residue polypeptide: MTEQKQVKKPSARRRARECTVQALYSWAVSGNTAEQVELAFVLDQDMDGVDKPYFRKLFRQTIENIETVDFSISPYIDRTFDELDPIETAILRLAVYELRFELDVPYKVVINEAIEVAKVFGADESHKYINGVLDKIAPALGRK.

It belongs to the NusB family.

Its function is as follows. Involved in transcription antitermination. Required for transcription of ribosomal RNA (rRNA) genes. Binds specifically to the boxA antiterminator sequence of the ribosomal RNA (rrn) operons. In Haemophilus influenzae (strain PittEE), this protein is Transcription antitermination protein NusB.